The primary structure comprises 380 residues: MESPIQIFRGDPGPTCSPSACLLPNSSSWFPNWAESDSNGSVGSEDQQLESAHISPAIPVIITAVYSVVFVVGLVGNSLVMFVIIRYTKMKTATNIYIFNLALADALVTTTMPFQSAVYLMNSWPFGDVLCKIVISIDYYNMFTSIFTLTMMSVDRYIAVCHPVKALDFRTPLKAKIINICIWLLASSVGISAIVLGGTKVREDVDVIECSLQFPDDEYSWWDLFMKICVFVFAFVIPVLIIIVCYTLMILRLKSVRLLSGSREKDRNLRRITKLVLVVVAVFIICWTPIHIFILVEALGSTSHSTAALSSYYFCIALGYTNSSLNPVLYAFLDENFKRCFRDFCFPIKMRMERQSTNRVRNTVQDPASMRDVGGMNKPV.

Topologically, residues 1–57 are extracellular; it reads MESPIQIFRGDPGPTCSPSACLLPNSSSWFPNWAESDSNGSVGSEDQQLESAHISPA. 2 N-linked (GlcNAc...) asparagine glycosylation sites follow: N25 and N39. The chain crosses the membrane as a helical span at residues 58–85; the sequence is IPVIITAVYSVVFVVGLVGNSLVMFVII. Topologically, residues 86 to 95 are cytoplasmic; that stretch reads RYTKMKTATN. A helical membrane pass occupies residues 96 to 119; that stretch reads IYIFNLALADALVTTTMPFQSAVY. The Extracellular portion of the chain corresponds to 120 to 132; the sequence is LMNSWPFGDVLCK. A disulfide bridge connects residues C131 and C210. Residues 133-154 form a helical membrane-spanning segment; the sequence is IVISIDYYNMFTSIFTLTMMSV. The Cytoplasmic portion of the chain corresponds to 155 to 173; the sequence is DRYIAVCHPVKALDFRTPL. The chain crosses the membrane as a helical span at residues 174 to 196; the sequence is KAKIINICIWLLASSVGISAIVL. The Extracellular segment spans residues 197 to 222; sequence GGTKVREDVDVIECSLQFPDDEYSWW. Residues 223-247 form a helical membrane-spanning segment; it reads DLFMKICVFVFAFVIPVLIIIVCYT. The Cytoplasmic segment spans residues 248–274; the sequence is LMILRLKSVRLLSGSREKDRNLRRITK. The helical transmembrane segment at 275–296 threads the bilayer; sequence LVLVVVAVFIICWTPIHIFILV. The Extracellular portion of the chain corresponds to 297 to 311; that stretch reads EALGSTSHSTAALSS. A helical membrane pass occupies residues 312–333; it reads YYFCIALGYTNSSLNPVLYAFL. The Cytoplasmic portion of the chain corresponds to 334–380; sequence DENFKRCFRDFCFPIKMRMERQSTNRVRNTVQDPASMRDVGGMNKPV. C345 is lipidated: S-palmitoyl cysteine.

It belongs to the G-protein coupled receptor 1 family. In terms of assembly, interacts with NHERF1. Interacts with GABARAPL1. In terms of tissue distribution, detected in brain (at protein level). Brain (neocortex, hippocampus, amygdala, medial habenula, hypothalamus, locus ceruleus, and parabrachial nucleus).

The protein resides in the cell membrane. G-protein coupled opioid receptor that functions as a receptor for endogenous alpha-neoendorphins and dynorphins, but has low affinity for beta-endorphins. Also functions as a receptor for various synthetic opioids and for the psychoactive diterpene salvinorin A. Ligand binding causes a conformation change that triggers signaling via guanine nucleotide-binding proteins (G proteins) and modulates the activity of down-stream effectors, such as adenylate cyclase. Signaling leads to the inhibition of adenylate cyclase activity. Inhibits neurotransmitter release by reducing calcium ion currents and increasing potassium ion conductance. Plays a role in the perception of pain. Plays a role in mediating reduced physical activity upon treatment with synthetic opioids. Plays a role in the regulation of salivation in response to synthetic opioids. May play a role in arousal and regulation of autonomic and neuroendocrine functions. This is Kappa-type opioid receptor (Oprk1) from Mus musculus (Mouse).